A 110-amino-acid chain; its full sequence is uncharacterized protein (110 aa).

This is an uncharacterized protein from Methanocaldococcus jannaschii (strain ATCC 43067 / DSM 2661 / JAL-1 / JCM 10045 / NBRC 100440) (Methanococcus jannaschii).